The chain runs to 412 residues: Putative competence-damage inducible protein (412 aa).

It belongs to the CinA family.

The sequence is that of Putative competence-damage inducible protein from Bacillus cereus (strain ZK / E33L).